The chain runs to 451 residues: METAWSNILNYKNVSDRYILTEKDKKGAFTRQYFEVYEARLKELKPRILENAEREIGKGKFTHSQLSDAKQDEEIFVVGVIVKRIAARPSILKSLLNEDKVAYDDYEEDAEEDEVKRYAGSIEDRIELESDKQTVRLEGNISMDECATGCCVGVLGKLGKEGVFHVNRLVWPSVKVPKKVAVDGTIAFVSGLDLTGDLEDDRLTISGLEFMADWMNVQVGNENQCPPIDRLVVIGPLVETKSNGCDVQSVVRTLTLSRAEKHSSTASLITVDKIINSIAEKPLVNTVDVTPGVGDPCSSMWPLPPIHRVCLPRCGMSDKKVNLVTNPYEFEVNGLRVMTMSGENVSELLRTSLKWTGADAIENIIKWQHVAPNCPDTLDAFPVAERDPLIMDITPHVIICGNQPHAEFRHIPIDGSNCLVVCLPKFSKTRVACFLNLSDLSLKWQNFDHQF.

The protein belongs to the DNA polymerase delta/II small subunit family. As to quaternary structure, heterodimer with subunits of 125 kDa and 50 kDa.

The protein resides in the nucleus. The catalysed reaction is DNA(n) + a 2'-deoxyribonucleoside 5'-triphosphate = DNA(n+1) + diphosphate. The function of the small subunit is not yet clear. The polypeptide is Probable DNA polymerase delta small subunit (Caenorhabditis elegans).